A 299-amino-acid chain; its full sequence is Nitrogenase iron protein (299 aa).

11 to 18 (GKGGIGKS) is a binding site for ATP. Cysteine 99 is a binding site for [4Fe-4S] cluster. Arginine 102 carries the post-translational modification ADP-ribosylarginine; by dinitrogenase reductase ADP-ribosyltransferase. Cysteine 133 contacts [4Fe-4S] cluster.

The protein belongs to the NifH/BchL/ChlL family. Homodimer. [4Fe-4S] cluster serves as cofactor. The reversible ADP-ribosylation of Arg-102 inactivates the nitrogenase reductase and regulates nitrogenase activity.

The catalysed reaction is N2 + 8 reduced [2Fe-2S]-[ferredoxin] + 16 ATP + 16 H2O = H2 + 8 oxidized [2Fe-2S]-[ferredoxin] + 2 NH4(+) + 16 ADP + 16 phosphate + 6 H(+). In terms of biological role, the key enzymatic reactions in nitrogen fixation are catalyzed by the nitrogenase complex, which has 2 components: the iron protein and the molybdenum-iron protein. The polypeptide is Nitrogenase iron protein (Methylobacterium nodulans (strain LMG 21967 / CNCM I-2342 / ORS 2060)).